The following is a 380-amino-acid chain: Peptide chain release factor 1-like, mitochondrial (380 aa).

The transit peptide at 1–26 (MRSRVLWGAARWLWPRRAVGPARRPL) directs the protein to the mitochondrion. A coiled-coil region spans residues 63-117 (ELLAVIKLLNEKERELRETEHLLHDENEDLRKLAENEITLCQKEITQLKHQIILL). Residues 236-300 (PKDLRIDTKR…LRAKLYSMHL (65 aa)) form a GGQ domain region. Residues 250–252 (GGQ) carry the GGQ motif. At glutamine 252 the chain carries N5-methylglutamine.

It belongs to the prokaryotic/mitochondrial release factor family. Methylation of glutamine in the GGQ triplet by HEMK1 is conserved from bacteria to mammals. Expressed in skeletal muscle (at protein level).

It localises to the mitochondrion. Mitochondrial peptide chain release factor that directs the termination of translation in response to the peptide chain termination codons UAA and UAG. The sequence is that of Peptide chain release factor 1-like, mitochondrial from Homo sapiens (Human).